Consider the following 134-residue polypeptide: Small ribosomal subunit protein uS11 (134 aa).

This sequence belongs to the universal ribosomal protein uS11 family. Part of the 30S ribosomal subunit. Interacts with proteins S7 and S18. Binds to IF-3.

Located on the platform of the 30S subunit, it bridges several disparate RNA helices of the 16S rRNA. Forms part of the Shine-Dalgarno cleft in the 70S ribosome. The protein is Small ribosomal subunit protein uS11 of Polaromonas sp. (strain JS666 / ATCC BAA-500).